The sequence spans 133 residues: Profilin Sal k 4.0301 (133 aa).

An intrachain disulfide couples cysteine 95 to cysteine 117.

It belongs to the profilin family. As to quaternary structure, occurs in many kinds of cells as a complex with monomeric actin in a 1:1 ratio. In terms of tissue distribution, expressed in pollen (at protein and mRNA level).

The protein resides in the cytoplasm. It localises to the cytoskeleton. Binds to actin and affects the structure of the cytoskeleton. At high concentrations, profilin prevents the polymerization of actin, whereas it enhances it at low concentrations. The chain is Profilin Sal k 4.0301 from Kali turgidum (Prickly saltwort).